The following is a 389-amino-acid chain: Cytochrome B translational activator CBS2 (389 aa).

The protein localises to the mitochondrion. Its function is as follows. Translational activator of cytochrome b. The cytochrome b (coB) leader RNA may represent the target sequence for CBS1 and/ or CBS2. This chain is Cytochrome B translational activator CBS2 (CBS2), found in Saccharomyces cerevisiae (strain ATCC 204508 / S288c) (Baker's yeast).